Consider the following 440-residue polypeptide: Ribosomal protein uS12 methylthiotransferase RimO (440 aa).

In terms of domain architecture, MTTase N-terminal spans 6–116; the sequence is PKVGFVSLGC…VVSAVHEVVP (111 aa). 6 residues coordinate [4Fe-4S] cluster: cysteine 15, cysteine 51, cysteine 80, cysteine 149, cysteine 153, and cysteine 156. Positions 135-374 constitute a Radical SAM core domain; the sequence is LTPRHYAYLK…AHQQAISSAR (240 aa). Residues 376–440 enclose the TRAM domain; the sequence is QAKIGLEMDV…DEYDMWGELV (65 aa).

This sequence belongs to the methylthiotransferase family. RimO subfamily. [4Fe-4S] cluster serves as cofactor.

Its subcellular location is the cytoplasm. The enzyme catalyses L-aspartate(89)-[ribosomal protein uS12]-hydrogen + (sulfur carrier)-SH + AH2 + 2 S-adenosyl-L-methionine = 3-methylsulfanyl-L-aspartate(89)-[ribosomal protein uS12]-hydrogen + (sulfur carrier)-H + 5'-deoxyadenosine + L-methionine + A + S-adenosyl-L-homocysteine + 2 H(+). Its function is as follows. Catalyzes the methylthiolation of an aspartic acid residue of ribosomal protein uS12. The chain is Ribosomal protein uS12 methylthiotransferase RimO from Ectopseudomonas mendocina (strain ymp) (Pseudomonas mendocina).